The following is a 356-amino-acid chain: Phosphate acyltransferase (356 aa).

Belongs to the PlsX family. In terms of assembly, homodimer. Probably interacts with PlsY.

The protein localises to the cytoplasm. It catalyses the reaction a fatty acyl-[ACP] + phosphate = an acyl phosphate + holo-[ACP]. The protein operates within lipid metabolism; phospholipid metabolism. In terms of biological role, catalyzes the reversible formation of acyl-phosphate (acyl-PO(4)) from acyl-[acyl-carrier-protein] (acyl-ACP). This enzyme utilizes acyl-ACP as fatty acyl donor, but not acyl-CoA. The chain is Phosphate acyltransferase from Escherichia coli (strain K12 / DH10B).